The primary structure comprises 94 residues: Integration host factor subunit beta (94 aa).

It belongs to the bacterial histone-like protein family. In terms of assembly, heterodimer of an alpha and a beta chain.

This protein is one of the two subunits of integration host factor, a specific DNA-binding protein that functions in genetic recombination as well as in transcriptional and translational control. This Brucella abortus (strain S19) protein is Integration host factor subunit beta.